Reading from the N-terminus, the 685-residue chain is Putative pentatricopeptide repeat-containing protein At3g08820 (685 aa).

PPR repeat units lie at residues 75–109 (NIFL…GLYL), 110–144 (HGFT…GFNH), 145–175 (DVAA…IPDR), 176–210 (SVVT…GVKP), 211–245 (DSYF…EMQK), 246–276 (NSFV…MVEK), 277–311 (DIVT…NLKP), 312–346 (DQFS…EFLT), 347–381 (NLFM…DIVI), 383–412 (NAAI…GISP), 413–443 (DGST…ISCV), and 449–479 (TVEH…MPMR). The tract at residues 484–559 (VWGALLSGCR…IPGYSWIELE (76 aa)) is type E motif. The tract at residues 560–590 (GKVHEFLADDKSHPLSDKIYAKLEDLGNEMR) is type E(+) motif. The interval 591 to 685 (LMGFVPTTEF…NGSCSCNDYW (95 aa)) is type DYW motif.

Belongs to the PPR family. PCMP-H subfamily.

This Arabidopsis thaliana (Mouse-ear cress) protein is Putative pentatricopeptide repeat-containing protein At3g08820 (PCMP-H84).